Here is a 150-residue protein sequence, read N- to C-terminus: Large ribosomal subunit protein uL13 (150 aa).

The tract at residues E130–Q150 is disordered.

It belongs to the universal ribosomal protein uL13 family. As to quaternary structure, part of the 50S ribosomal subunit.

Its function is as follows. This protein is one of the early assembly proteins of the 50S ribosomal subunit, although it is not seen to bind rRNA by itself. It is important during the early stages of 50S assembly. The protein is Large ribosomal subunit protein uL13 of Synechococcus sp. (strain CC9311).